The sequence spans 261 residues: Putative [LysW]-aminoadipate/[LysW]-glutamate kinase (261 aa).

Substrate is bound by residues 35–36 (GG), R62, and N162.

The protein belongs to the acetylglutamate kinase family. LysZ subfamily.

The protein localises to the cytoplasm. The catalysed reaction is [amino-group carrier protein]-C-terminal-N-(1,4-dicarboxybutan-1-yl)-L-glutamine + ATP = [amino-group carrier protein]-C-terminal-N-(1-carboxy-5-phosphooxy-5-oxopentan-1-yl)-L-glutamine + ADP. It catalyses the reaction [amino-group carrier protein]-C-terminal-gamma-(L-glutamyl)-L-glutamate + ATP = [amino-group carrier protein]-C-terminal-gamma-(5-phospho-L-glutamyl)-L-glutamate + ADP. It functions in the pathway amino-acid biosynthesis; L-lysine biosynthesis via AAA pathway; L-lysine from L-alpha-aminoadipate (Thermus route): step 2/5. It participates in amino-acid biosynthesis; L-arginine biosynthesis. Functionally, involved in both the arginine and lysine biosynthetic pathways. Phosphorylates the LysW-bound precursors glutamate (for arginine biosynthesis), respectively alpha-aminoadipate (for lysine biosynthesis). This chain is Putative [LysW]-aminoadipate/[LysW]-glutamate kinase, found in Pyrobaculum islandicum (strain DSM 4184 / JCM 9189 / GEO3).